A 202-amino-acid polypeptide reads, in one-letter code: uncharacterized protein (202 aa).

The protein belongs to the dienelactone hydrolase family.

This is an uncharacterized protein from Bacillus subtilis (strain 168).